A 515-amino-acid polypeptide reads, in one-letter code: Maturase K (515 aa).

It belongs to the intron maturase 2 family. MatK subfamily.

The protein localises to the plastid. The protein resides in the chloroplast. In terms of biological role, usually encoded in the trnK tRNA gene intron. Probably assists in splicing its own and other chloroplast group II introns. The polypeptide is Maturase K (Pinus elliottii (Slash pine)).